A 325-amino-acid polypeptide reads, in one-letter code: Lipid droplet-associated hydrolase (325 aa).

Ser-139 functions as the Nucleophile in the catalytic mechanism. Active-site charge relay system residues include Asp-271 and His-300.

Belongs to the AB hydrolase superfamily. LDAH family. In terms of tissue distribution, present in macrophage-rich areas in atherosclerotic lesions (at protein level). Expressed in monocytes and monocyte-derived macrophages (at protein level).

It localises to the lipid droplet. The protein localises to the endoplasmic reticulum. The enzyme catalyses a cholesterol ester + H2O = cholesterol + a fatty acid + H(+). Probable serine lipid hydrolase associated with lipid droplets. Has low cholesterol esterase activity. Appears to lack triglyceride lipase activity. Involved in cholesterol and triglyceride homeostasis; has opposing effects, stimulating cellular triglyceride accumulation and cellular cholesterol release. Acts antagonistically with PNPLA2/ATGL in regulation of cellular lipid stores. May regulate triglyceride accumulation indirectly through stimulation of PNPLA2/ATGL ubiquitination and proteasomal degradation. Promotes microtubule-dependent lipid droplet fusion. Highly expressed in macrophage-rich areas in atherosclerotic lesions, suggesting that it could promote cholesterol ester turnover in macrophages. The chain is Lipid droplet-associated hydrolase from Homo sapiens (Human).